Consider the following 22-residue polypeptide: Mu-conotoxin SxIIIA (22 aa).

Cystine bridges form between cysteine 2–cysteine 15, cysteine 3–cysteine 20, and cysteine 10–cysteine 21. Alanine 22 carries the post-translational modification Alanine amide.

The protein belongs to the conotoxin M superfamily. Expressed by the venom duct.

It localises to the secreted. Its function is as follows. Mu-conotoxins block voltage-gated sodium channels (Nav). This synthetic toxin potently blocks rNav1.4/SCN4A (IC(50)= 7 nM). It also moderately blocks rNav1.1/SCN1A (IC(50)=370 nM), rNav1.2/SCN2A (IC(50)=1 uM), and mNav1.6/SCN6A (IC(50)=570 nM). It is noteworthy that coexpression of subunits beta-2 or beta-4 (but not beta-1 or beta-3) decrease by more that 10-fold the binding potency of the toxin to rNav1.6. It is also noteworthy that the toxin is 50-fold more potent on mouse Nav1.6 than on rat Nav1.6. In vivo, when injected intraperitoneally or subcutaneously in mice, causes motor impairment, paralysis and death. In Conus striolatus (Cone snail), this protein is Mu-conotoxin SxIIIA.